Here is a 559-residue protein sequence, read N- to C-terminus: Potassium-transporting ATPase potassium-binding subunit (559 aa).

Transmembrane regions (helical) follow at residues 5–25, 27–47, 63–83, 132–152, 170–190, 253–273, 283–303, 327–347, 356–376, 379–399, 416–436, 484–504, and 524–544; these read GFLLIASFLLILLVLAKPLGS, LARLIAAVPLPGVAGIERILW, LLALLTLNLLGLGILFCLLFW, GLTVQNFLSAATGIAVVFALI, LVRITLWILFPVALIIALFFI, LAQMLAIFLIPAALCFAFGEA, LLWAMSFIFVVCVAVVMWAEV, FGVLASSLFAVVTTAASCGAV, ALGGMVPMWLMQIGEVVFGGV, GLYGMLLFVLLAVFIAGLMIG, MTALAILVTPMLVLLGSALAM, LLAFCMFVGRFGVIIPVMAIA, and GALFIGLLIGTVLLVGALTFI.

It belongs to the KdpA family. As to quaternary structure, the system is composed of three essential subunits: KdpA, KdpB and KdpC.

It is found in the cell inner membrane. Its function is as follows. Part of the high-affinity ATP-driven potassium transport (or Kdp) system, which catalyzes the hydrolysis of ATP coupled with the electrogenic transport of potassium into the cytoplasm. This subunit binds the periplasmic potassium ions and delivers the ions to the membrane domain of KdpB through an intramembrane tunnel. The chain is Potassium-transporting ATPase potassium-binding subunit from Salmonella typhimurium (strain LT2 / SGSC1412 / ATCC 700720).